The chain runs to 403 residues: Odorant receptor 43b (403 aa).

At 1–49 the chain is on the cytoplasmic side; it reads MFGHFKLVYPAPISEPIQSRDSNAYMMETLRNSGLNLKNDFGIGRKIWR. The helical transmembrane segment at 50 to 70 threads the bilayer; the sequence is VFSFTYNMVILPVSFPINYVI. Residues 71 to 83 lie on the Extracellular side of the membrane; sequence HLAEFPPELLLQS. The chain crosses the membrane as a helical span at residues 84–104; the sequence is LQLCLNTWCFALKFFTLIVYT. At 105–139 the chain is on the cytoplasmic side; it reads HRLELANKHFDELDKYCVKPAEKRKVRDMVATITR. Residues 140–160 form a helical membrane-spanning segment; the sequence is LYLTFVVVYVLYATSTLLDGL. Topologically, residues 161–193 are extracellular; that stretch reads LHHRVPYNTYYPFINWRVDRTQMYIQSFLEYFT. The chain crosses the membrane as a helical span at residues 194–214; sequence VGYAIYVATATDSYPVIYVAA. Topologically, residues 215 to 271 are cytoplasmic; that stretch reads LRTHILLLKDRIIYLGDPSNEGSSDPSYMFKSLVDCIKAHRTMLNFCDAIQPIISGT. Residues 272-292 form a helical membrane-spanning segment; the sequence is IFAQFIICGSILGIIMINMVL. The Extracellular segment spans residues 293 to 299; it reads FADQSTR. Residues 300-320 traverse the membrane as a helical segment; sequence FGIVIYVMAVLLQTFPLCFYC. Topologically, residues 321 to 372 are cytoplasmic; it reads NAIVDDCKELAHALFHSAWWVQDKRYQRTVIQFLQKLQQPMTFTAMNIFNIN. A helical membrane pass occupies residues 373-393; the sequence is LATNINVAKFAFTVYAIASGM. The Extracellular segment spans residues 394–403; the sequence is NLDQKLSIKE.

This sequence belongs to the insect chemoreceptor superfamily. Heteromeric odorant receptor channel (TC 1.A.69) family. Or2a subfamily. Interacts with Orco. Complexes exist early in the endomembrane system in olfactory sensory neurons (OSNs), coupling these complexes to the conserved ciliary trafficking pathway. In terms of tissue distribution, expressed in 16 olfactory receptor neurons in a broad area across the antenna, including both anterior and posterior faces and in the maxillary palp. This expression pattern matches the distribution of the small sensilla basiconica. Expression in the antenna is observed late in antennal development at 93 hours APF.

The protein resides in the cell membrane. In terms of biological role, odorant receptor which mediates acceptance or avoidance behavior, depending on its substrates. The odorant receptor repertoire encodes a large collection of odor stimuli that vary widely in identity, intensity, and duration. May form a complex with Orco to form odorant-sensing units, providing sensitive and prolonged odorant signaling and calcium permeability. This chain is Odorant receptor 43b (Or43b), found in Drosophila melanogaster (Fruit fly).